Consider the following 376-residue polypeptide: Riboflavin biosynthesis protein RibD (376 aa).

Residues 1–157 (MCFPLPSNSF…PIFFHYIQTK (157 aa)) are deaminase. The region spanning 13–135 (MTDLDYMRRA…QLRQAGVEVV (123 aa)) is the CMP/dCMP-type deaminase domain. Histidine 62 provides a ligand contact to Zn(2+). Residue glutamate 64 is the Proton donor of the active site. Residues cysteine 87 and cysteine 96 each coordinate Zn(2+). A reductase region spans residues 158-376 (RPYVLMKYAM…LLDYVVISPL (219 aa)). Alanine 166 provides a ligand contact to NADP(+). Serine 180 provides a ligand contact to substrate. Tryptophan 182 contributes to the NADP(+) binding site. Residue arginine 196 coordinates substrate. NADP(+)-binding residues include threonine 208 and aspartate 212. 2 residues coordinate substrate: leucine 216 and arginine 219. Serine 233 contacts NADP(+). Glutamate 304 provides a ligand contact to substrate. 306–312 (GSSLNFS) serves as a coordination point for NADP(+).

This sequence in the N-terminal section; belongs to the cytidine and deoxycytidylate deaminase family. It in the C-terminal section; belongs to the HTP reductase family. Zn(2+) is required as a cofactor.

It catalyses the reaction 2,5-diamino-6-hydroxy-4-(5-phosphoribosylamino)-pyrimidine + H2O + H(+) = 5-amino-6-(5-phospho-D-ribosylamino)uracil + NH4(+). The catalysed reaction is 5-amino-6-(5-phospho-D-ribitylamino)uracil + NADP(+) = 5-amino-6-(5-phospho-D-ribosylamino)uracil + NADPH + H(+). Its pathway is cofactor biosynthesis; riboflavin biosynthesis; 5-amino-6-(D-ribitylamino)uracil from GTP: step 2/4. It functions in the pathway cofactor biosynthesis; riboflavin biosynthesis; 5-amino-6-(D-ribitylamino)uracil from GTP: step 3/4. Its function is as follows. Converts 2,5-diamino-6-(ribosylamino)-4(3h)-pyrimidinone 5'-phosphate into 5-amino-6-(ribosylamino)-2,4(1h,3h)-pyrimidinedione 5'-phosphate. This is Riboflavin biosynthesis protein RibD (ribD) from Actinobacillus pleuropneumoniae (Haemophilus pleuropneumoniae).